Reading from the N-terminus, the 462-residue chain is ATP synthase subunit beta (462 aa).

149-156 (GGAGVGKT) serves as a coordination point for ATP.

It belongs to the ATPase alpha/beta chains family. F-type ATPases have 2 components, CF(1) - the catalytic core - and CF(0) - the membrane proton channel. CF(1) has five subunits: alpha(3), beta(3), gamma(1), delta(1), epsilon(1). CF(0) has three main subunits: a(1), b(2) and c(9-12). The alpha and beta chains form an alternating ring which encloses part of the gamma chain. CF(1) is attached to CF(0) by a central stalk formed by the gamma and epsilon chains, while a peripheral stalk is formed by the delta and b chains.

It localises to the cell inner membrane. The catalysed reaction is ATP + H2O + 4 H(+)(in) = ADP + phosphate + 5 H(+)(out). Its function is as follows. Produces ATP from ADP in the presence of a proton gradient across the membrane. The catalytic sites are hosted primarily by the beta subunits. In Fusobacterium nucleatum subsp. nucleatum (strain ATCC 25586 / DSM 15643 / BCRC 10681 / CIP 101130 / JCM 8532 / KCTC 2640 / LMG 13131 / VPI 4355), this protein is ATP synthase subunit beta.